A 427-amino-acid polypeptide reads, in one-letter code: Histidinol dehydrogenase (427 aa).

Positions 232, 254, and 257 each coordinate substrate. Zn(2+)-binding residues include Gln254 and His257. Residues Glu322 and His323 each act as proton acceptor in the active site. Positions 323, 356, 410, and 415 each coordinate substrate. Asp356 contacts Zn(2+). Residue His415 coordinates Zn(2+).

The protein belongs to the histidinol dehydrogenase family. It depends on Zn(2+) as a cofactor.

It catalyses the reaction L-histidinol + 2 NAD(+) + H2O = L-histidine + 2 NADH + 3 H(+). The protein operates within amino-acid biosynthesis; L-histidine biosynthesis; L-histidine from 5-phospho-alpha-D-ribose 1-diphosphate: step 9/9. Functionally, catalyzes the sequential NAD-dependent oxidations of L-histidinol to L-histidinaldehyde and then to L-histidine. In Listeria monocytogenes serovar 1/2a (strain ATCC BAA-679 / EGD-e), this protein is Histidinol dehydrogenase.